Consider the following 440-residue polypeptide: tRNA(Ile)-lysidine synthase (440 aa).

25 to 30 (SGGVDS) serves as a coordination point for ATP.

It belongs to the tRNA(Ile)-lysidine synthase family.

The protein resides in the cytoplasm. The catalysed reaction is cytidine(34) in tRNA(Ile2) + L-lysine + ATP = lysidine(34) in tRNA(Ile2) + AMP + diphosphate + H(+). In terms of biological role, ligates lysine onto the cytidine present at position 34 of the AUA codon-specific tRNA(Ile) that contains the anticodon CAU, in an ATP-dependent manner. Cytidine is converted to lysidine, thus changing the amino acid specificity of the tRNA from methionine to isoleucine. The polypeptide is tRNA(Ile)-lysidine synthase (Vibrio cholerae serotype O1 (strain ATCC 39541 / Classical Ogawa 395 / O395)).